The sequence spans 692 residues: Potassium-transporting ATPase ATP-binding subunit (692 aa).

A run of 4 helical transmembrane segments spans residues 50 to 70, 74 to 94, 240 to 260, and 266 to 286; these read PIMF…FLPS, SIPG…VLFA, LTLI…YLGF, and VLVA…LSAI. Aspartate 319 (4-aspartylphosphate intermediate) is an active-site residue. ATP contacts are provided by residues aspartate 356, glutamate 360, 388 to 395, and lysine 407; that span reads FKAETRMS. 2 residues coordinate Mg(2+): aspartate 530 and aspartate 534. 3 helical membrane-spanning segments follow: residues 600-620, 628-648, and 672-692; these read FAII…LNIM, AILS…PLAM, and GGVI…GLFI.

It belongs to the cation transport ATPase (P-type) (TC 3.A.3) family. Type IA subfamily. The system is composed of three essential subunits: KdpA, KdpB and KdpC.

The protein resides in the cell membrane. It catalyses the reaction K(+)(out) + ATP + H2O = K(+)(in) + ADP + phosphate + H(+). Its function is as follows. Part of the high-affinity ATP-driven potassium transport (or Kdp) system, which catalyzes the hydrolysis of ATP coupled with the electrogenic transport of potassium into the cytoplasm. This subunit is responsible for energy coupling to the transport system and for the release of the potassium ions to the cytoplasm. The chain is Potassium-transporting ATPase ATP-binding subunit from Bacillus thuringiensis (strain Al Hakam).